Reading from the N-terminus, the 439-residue chain is GTPase Der (439 aa).

2 consecutive EngA-type G domains span residues proline 4–glutamate 168 and isoleucine 177–asparagine 352. GTP contacts are provided by residues glycine 10 to serine 17, aspartate 57 to isoleucine 61, asparagine 120 to aspartate 123, glycine 183 to serine 190, aspartate 230 to leucine 234, and asparagine 295 to aspartate 298. A KH-like domain is found at lysine 353–lysine 437.

This sequence belongs to the TRAFAC class TrmE-Era-EngA-EngB-Septin-like GTPase superfamily. EngA (Der) GTPase family. As to quaternary structure, associates with the 50S ribosomal subunit.

Its function is as follows. GTPase that plays an essential role in the late steps of ribosome biogenesis. This chain is GTPase Der, found in Clostridium botulinum (strain ATCC 19397 / Type A).